Here is a 171-residue protein sequence, read N- to C-terminus: MPLPLFASEGGFGLNLNLFETNLINLVIVIGVLYWFLKGFLGGILERRRQAILKDLEDSEGRLRQATTDLARAQEDLAAAQQKAEKIRSDGKARAEAIRKDGEMRTINAMAAVKQDALADLNAEGARLTEQLRREAALAAIDKVMTELPGRLDQAGQSRLIDASISNLEDA.

A helical membrane pass occupies residues 24–44 (INLVIVIGVLYWFLKGFLGGI).

This sequence belongs to the ATPase B chain family. As to quaternary structure, F-type ATPases have 2 components, F(1) - the catalytic core - and F(0) - the membrane proton channel. F(1) has five subunits: alpha(3), beta(3), gamma(1), delta(1), epsilon(1). F(0) has four main subunits: a(1), b(1), b'(1) and c(10-14). The alpha and beta chains form an alternating ring which encloses part of the gamma chain. F(1) is attached to F(0) by a central stalk formed by the gamma and epsilon chains, while a peripheral stalk is formed by the delta, b and b' chains.

It is found in the cellular thylakoid membrane. Functionally, f(1)F(0) ATP synthase produces ATP from ADP in the presence of a proton or sodium gradient. F-type ATPases consist of two structural domains, F(1) containing the extramembraneous catalytic core and F(0) containing the membrane proton channel, linked together by a central stalk and a peripheral stalk. During catalysis, ATP synthesis in the catalytic domain of F(1) is coupled via a rotary mechanism of the central stalk subunits to proton translocation. Component of the F(0) channel, it forms part of the peripheral stalk, linking F(1) to F(0). The protein is ATP synthase subunit b of Synechococcus sp. (strain WH7803).